The chain runs to 91 residues: Small ribosomal subunit protein uS19 (91 aa).

It belongs to the universal ribosomal protein uS19 family.

Functionally, protein S19 forms a complex with S13 that binds strongly to the 16S ribosomal RNA. The protein is Small ribosomal subunit protein uS19 of Synechococcus sp. (strain RCC307).